The following is a 375-amino-acid chain: Succinyl-diaminopimelate desuccinylase (375 aa).

Histidine 66 provides a ligand contact to Zn(2+). Aspartate 68 is a catalytic residue. Aspartate 99 contributes to the Zn(2+) binding site. Residue glutamate 133 is the Proton acceptor of the active site. Zn(2+) contacts are provided by glutamate 134, glutamate 162, and histidine 348.

The protein belongs to the peptidase M20A family. DapE subfamily. As to quaternary structure, homodimer. Zn(2+) is required as a cofactor. Requires Co(2+) as cofactor.

The catalysed reaction is N-succinyl-(2S,6S)-2,6-diaminopimelate + H2O = (2S,6S)-2,6-diaminopimelate + succinate. It participates in amino-acid biosynthesis; L-lysine biosynthesis via DAP pathway; LL-2,6-diaminopimelate from (S)-tetrahydrodipicolinate (succinylase route): step 3/3. Functionally, catalyzes the hydrolysis of N-succinyl-L,L-diaminopimelic acid (SDAP), forming succinate and LL-2,6-diaminopimelate (DAP), an intermediate involved in the bacterial biosynthesis of lysine and meso-diaminopimelic acid, an essential component of bacterial cell walls. The polypeptide is Succinyl-diaminopimelate desuccinylase (Salmonella agona (strain SL483)).